The primary structure comprises 424 residues: Gamma-glutamyl phosphate reductase (424 aa).

It belongs to the gamma-glutamyl phosphate reductase family.

It is found in the cytoplasm. It catalyses the reaction L-glutamate 5-semialdehyde + phosphate + NADP(+) = L-glutamyl 5-phosphate + NADPH + H(+). It functions in the pathway amino-acid biosynthesis; L-proline biosynthesis; L-glutamate 5-semialdehyde from L-glutamate: step 2/2. In terms of biological role, catalyzes the NADPH-dependent reduction of L-glutamate 5-phosphate into L-glutamate 5-semialdehyde and phosphate. The product spontaneously undergoes cyclization to form 1-pyrroline-5-carboxylate. In Shewanella sediminis (strain HAW-EB3), this protein is Gamma-glutamyl phosphate reductase.